The chain runs to 99 residues: DNA-directed RNA polymerase subunit omega (99 aa).

Belongs to the RNA polymerase subunit omega family. The RNAP catalytic core consists of 2 alpha, 1 beta, 1 beta' and 1 omega subunit. When a sigma factor is associated with the core the holoenzyme is formed, which can initiate transcription.

It catalyses the reaction RNA(n) + a ribonucleoside 5'-triphosphate = RNA(n+1) + diphosphate. In terms of biological role, promotes RNA polymerase assembly. Latches the N- and C-terminal regions of the beta' subunit thereby facilitating its interaction with the beta and alpha subunits. In Deinococcus geothermalis (strain DSM 11300 / CIP 105573 / AG-3a), this protein is DNA-directed RNA polymerase subunit omega.